The chain runs to 170 residues: FMRFamide-like neuropeptides 6 (170 aa).

A signal peptide spans 1-19 (MNSRGLILTLGVVIAVAFA). Q20 bears the Pyrrolidone carboxylic acid mark. Phenylalanine amide is present on F39. Residues 42–51 (SDGGNPMEME) constitute a propeptide that is removed on maturation. A Phenylalanine amide modification is found at F60. Positions 63-81 (RSSGGDEQELVGGDDIDME) are excised as a propeptide. Phenylalanine amide is present on F90. A propeptide spanning residues 93 to 104 (RSGPQEDDMPME) is cleaved from the precursor. F113 carries the phenylalanine amide modification. The propeptide occupies 116-136 (RSSDMEVIGNEGVDGDAHDLF). The residue at position 145 (F145) is a Phenylalanine amide. The propeptide occupies 148-159 (RSMGEEEDHDMM). The interval 150–170 (MGEEEDHDMMKRKSAYMRFGR) is disordered. Residues 159-170 (MKRKSAYMRFGR) are compositionally biased toward basic residues. F168 carries the phenylalanine amide modification.

Belongs to the FARP (FMRFamide related peptide) family. In terms of tissue distribution, each flp gene is expressed in a distinct set of neurons. Flp-6 is expressed in the ASE sensory neurons, AFD, ASG, PVT and I1 neurons.

It localises to the secreted. FMRFamides and FMRFamide-like peptides are neuropeptides. KSAYMRF-amide has an excitatory effect on dissected pharyngeal myogenic muscle system. The sequence is that of FMRFamide-like neuropeptides 6 from Caenorhabditis elegans.